The primary structure comprises 359 residues: Protein RecA (359 aa).

G74 to T81 contributes to the ATP binding site.

It belongs to the RecA family.

Its subcellular location is the cytoplasm. Can catalyze the hydrolysis of ATP in the presence of single-stranded DNA, the ATP-dependent uptake of single-stranded DNA by duplex DNA, and the ATP-dependent hybridization of homologous single-stranded DNAs. It interacts with LexA causing its activation and leading to its autocatalytic cleavage. In Anaplasma marginale (strain St. Maries), this protein is Protein RecA.